Here is a 353-residue protein sequence, read N- to C-terminus: Photosystem II protein D1 (353 aa).

Threonine 2 bears the N-acetylthreonine mark. At threonine 2 the chain carries Phosphothreonine. 3 consecutive transmembrane segments (helical) span residues 29-46 (YIGWFGVLMIPTLLTATS), 118-133 (HFLLGVACYMGREWEL), and 142-156 (WIAVAYSAPVAAATA). Histidine 118 lines the chlorophyll a pocket. Residue tyrosine 126 coordinates pheophytin a. Residues aspartate 170 and glutamate 189 each coordinate [CaMn4O5] cluster. The helical transmembrane segment at 197 to 218 (FHMLGVAGVFGGSLFSAMHGSL) threads the bilayer. A chlorophyll a-binding site is contributed by histidine 198. A quinone is bound by residues histidine 215 and 264–265 (SF). Histidine 215 serves as a coordination point for Fe cation. Residue histidine 272 participates in Fe cation binding. A helical transmembrane segment spans residues 274 to 288 (FLAAWPVVGIWFTAL). [CaMn4O5] cluster contacts are provided by histidine 332, glutamate 333, aspartate 342, and alanine 344. The propeptide occupies 345–353 (AIEAPSTNG).

The protein belongs to the reaction center PufL/M/PsbA/D family. PSII is composed of 1 copy each of membrane proteins PsbA, PsbB, PsbC, PsbD, PsbE, PsbF, PsbH, PsbI, PsbJ, PsbK, PsbL, PsbM, PsbT, PsbX, PsbY, PsbZ, Psb30/Ycf12, at least 3 peripheral proteins of the oxygen-evolving complex and a large number of cofactors. It forms dimeric complexes. Requires The D1/D2 heterodimer binds P680, chlorophylls that are the primary electron donor of PSII, and subsequent electron acceptors. It shares a non-heme iron and each subunit binds pheophytin, quinone, additional chlorophylls, carotenoids and lipids. D1 provides most of the ligands for the Mn4-Ca-O5 cluster of the oxygen-evolving complex (OEC). There is also a Cl(-1) ion associated with D1 and D2, which is required for oxygen evolution. The PSII complex binds additional chlorophylls, carotenoids and specific lipids. as cofactor. Post-translationally, tyr-161 forms a radical intermediate that is referred to as redox-active TyrZ, YZ or Y-Z. In terms of processing, C-terminally processed by CTPA; processing is essential to allow assembly of the oxygen-evolving complex and thus photosynthetic growth.

The protein localises to the plastid. It is found in the chloroplast thylakoid membrane. It carries out the reaction 2 a plastoquinone + 4 hnu + 2 H2O = 2 a plastoquinol + O2. Functionally, photosystem II (PSII) is a light-driven water:plastoquinone oxidoreductase that uses light energy to abstract electrons from H(2)O, generating O(2) and a proton gradient subsequently used for ATP formation. It consists of a core antenna complex that captures photons, and an electron transfer chain that converts photonic excitation into a charge separation. The D1/D2 (PsbA/PsbD) reaction center heterodimer binds P680, the primary electron donor of PSII as well as several subsequent electron acceptors. The protein is Photosystem II protein D1 of Petunia hybrida (Petunia).